A 556-amino-acid chain; its full sequence is Formate--tetrahydrofolate ligase (556 aa).

An ATP-binding site is contributed by 65-72 (TPAGEGKT).

This sequence belongs to the formate--tetrahydrofolate ligase family.

The enzyme catalyses (6S)-5,6,7,8-tetrahydrofolate + formate + ATP = (6R)-10-formyltetrahydrofolate + ADP + phosphate. The protein operates within one-carbon metabolism; tetrahydrofolate interconversion. The protein is Formate--tetrahydrofolate ligase of Ruminiclostridium cellulolyticum (strain ATCC 35319 / DSM 5812 / JCM 6584 / H10) (Clostridium cellulolyticum).